Consider the following 433-residue polypeptide: Enolase (433 aa).

Gln-167 is a binding site for (2R)-2-phosphoglycerate. The active-site Proton donor is Glu-209. Positions 246, 291, and 318 each coordinate Mg(2+). Lys-343, Arg-372, Ser-373, and Lys-394 together coordinate (2R)-2-phosphoglycerate. Catalysis depends on Lys-343, which acts as the Proton acceptor.

This sequence belongs to the enolase family. In terms of assembly, component of the RNA degradosome, a multiprotein complex involved in RNA processing and mRNA degradation. The cofactor is Mg(2+).

Its subcellular location is the cytoplasm. It is found in the secreted. The protein resides in the cell surface. The catalysed reaction is (2R)-2-phosphoglycerate = phosphoenolpyruvate + H2O. It participates in carbohydrate degradation; glycolysis; pyruvate from D-glyceraldehyde 3-phosphate: step 4/5. In terms of biological role, catalyzes the reversible conversion of 2-phosphoglycerate (2-PG) into phosphoenolpyruvate (PEP). It is essential for the degradation of carbohydrates via glycolysis. This chain is Enolase, found in Shewanella frigidimarina (strain NCIMB 400).